A 230-amino-acid polypeptide reads, in one-letter code: Demethylmenaquinone methyltransferase (230 aa).

Residues Thr-62, Asp-80, 100-101 (DG), and Ser-117 each bind S-adenosyl-L-methionine.

This sequence belongs to the class I-like SAM-binding methyltransferase superfamily. MenG/UbiE family.

The catalysed reaction is a 2-demethylmenaquinol + S-adenosyl-L-methionine = a menaquinol + S-adenosyl-L-homocysteine + H(+). It functions in the pathway quinol/quinone metabolism; menaquinone biosynthesis; menaquinol from 1,4-dihydroxy-2-naphthoate: step 2/2. In terms of biological role, methyltransferase required for the conversion of demethylmenaquinol (DMKH2) to menaquinol (MKH2). The polypeptide is Demethylmenaquinone methyltransferase (Corynebacterium efficiens (strain DSM 44549 / YS-314 / AJ 12310 / JCM 11189 / NBRC 100395)).